We begin with the raw amino-acid sequence, 164 residues long: Thiol peroxidase (164 aa).

Positions 18–163 (VSEGQHAPDF…FDAALEAYRN (146 aa)) constitute a Thioredoxin domain. Cys-60 (cysteine sulfenic acid (-SOH) intermediate) is an active-site residue. A disulfide bridge connects residues Cys-60 and Cys-93.

The protein belongs to the peroxiredoxin family. Tpx subfamily. Homodimer.

It carries out the reaction a hydroperoxide + [thioredoxin]-dithiol = an alcohol + [thioredoxin]-disulfide + H2O. Its function is as follows. Thiol-specific peroxidase that catalyzes the reduction of hydrogen peroxide and organic hydroperoxides to water and alcohols, respectively. Plays a role in cell protection against oxidative stress by detoxifying peroxides. The chain is Thiol peroxidase from Staphylococcus haemolyticus (strain JCSC1435).